The following is a 1044-amino-acid chain: Spindle assembly checkpoint serine/threonine-protein kinase bub1 (1044 aa).

In terms of domain architecture, BUB1 N-terminal spans 36–204 (FQEELDIIEE…SSPFPPPRIV (169 aa)). Disordered stretches follow at residues 209 to 259 (PVSS…PLLY), 317 to 343 (VHHD…TPTR), 404 to 446 (ESLE…SQEE), 484 to 555 (KNSN…DSNS), and 685 to 705 (IKPK…SLDG). Polar residues predominate over residues 223–239 (QVFSDASSSRDSQNASD). The segment covering 430–442 (NSSNSGATSLTGR) has biased composition (polar residues). Low complexity predominate over residues 504-518 (STLQEETATGTTSTT). Residues 544-555 (RSPQYSTVDSNS) are compositionally biased toward polar residues. Phosphothreonine is present on threonine 550. A Protein kinase domain is found at 718-1044 (LSVISKLGQG…LLKSIEKRKI (327 aa)). ATP-binding residues include alanine 728, phenylalanine 729, alanine 730, lysine 762, and aspartate 809. The active-site Proton acceptor is the aspartate 861. ATP is bound by residues aspartate 865, asparagine 866, and aspartate 900.

Belongs to the protein kinase superfamily. Ser/Thr protein kinase family. BUB1 subfamily. As to quaternary structure, part of the BUB1-BUB3 complex, composed of bub1 and bub3. Interacts with spc7 (when phosphorylated on MELT motifs); to recruit the bub1-bub3 complex to kinetochores. Interacts with mad3. In terms of processing, autophosphorylated.

The protein resides in the nucleus. It localises to the chromosome. It is found in the centromere. Its subcellular location is the kinetochore. It catalyses the reaction L-seryl-[protein] + ATP = O-phospho-L-seryl-[protein] + ADP + H(+). The enzyme catalyses L-threonyl-[protein] + ATP = O-phospho-L-threonyl-[protein] + ADP + H(+). Its function is as follows. Involved in mitotic spindle assembly checkpoint signaling, a process that delays anaphase until chromosomes are bioriented on the spindle, and in the repair of incorrect mitotic kinetochore-spindle microtubule attachments. Acts as a kinetochore scaffold for the recruitment of other spindle assembly checkpoint components. In Schizosaccharomyces pombe (strain 972 / ATCC 24843) (Fission yeast), this protein is Spindle assembly checkpoint serine/threonine-protein kinase bub1.